We begin with the raw amino-acid sequence, 650 residues long: Solute carrier family 23 member 2 (650 aa).

The segment covering 1-20 has biased composition (polar residues); it reads MMGIGKNTTSKSMEAGSSTE. The segment at 1-21 is disordered; the sequence is MMGIGKNTTSKSMEAGSSTEG. The Cytoplasmic segment spans residues 9–110; it reads TSKSMEAGSS…LCIFLGLQHY (102 aa). S70 carries the phosphoserine modification. Phosphothreonine is present on T75. At S78 the chain carries Phosphoserine. A Phosphothreonine modification is found at T79. S81 is subject to Phosphoserine. Residues 111-131 traverse the membrane as a helical segment; it reads LTCFSGTIAVPFLLADAMCVG. At 132 to 139 the chain is on the extracellular side; sequence YDQWATSQ. Residues 140–160 form a helical membrane-spanning segment; it reads LIGTIFFCVGITTLLQTTFGC. Residue R161 is a topological domain, cytoplasmic. Residues 162 to 182 form a helical membrane-spanning segment; the sequence is LPLFQASAFAFLAPARAILSL. The Extracellular portion of the chain corresponds to 183 to 218; that stretch reads DKWKCNTTDVSVANGTAELLHTEHIWYPRIREIQGA. N-linked (GlcNAc...) asparagine glycosylation is found at N188 and N196. A helical transmembrane segment spans residues 219-239; it reads IIMSSLIEVVIGLLGLPGALL. Over 240–266 the chain is Cytoplasmic; the sequence is KYIGPLTITPTVALIGLSGFQAAGERA. Residues 267 to 284 traverse the membrane as a helical segment; that stretch reads GKHWGIAMLTIFLVLLFS. Topologically, residues 285–288 are extracellular; it reads QYAR. The segment at residues 289 to 302 is an intramembrane region (helical); it reads NVKFPLPIYKSKKG. Residues 303–309 lie on the Extracellular side of the membrane; it reads WTAYKLQ. The helical transmembrane segment at 310–330 threads the bilayer; sequence LFKMFPIILAILVSWLLCFIF. At 331-371 the chain is on the cytoplasmic side; sequence TVTDVFPPDSTKYGFYARTDARQGVLLVAPWFKVPYPFQWG. A helical transmembrane segment spans residues 372–392; the sequence is LPTVSAAGVIGMLSAVVASII. The Extracellular segment spans residues 393–417; it reads ESIGDYYACARLSCAPPPPIHAINR. A helical membrane pass occupies residues 418–438; sequence GIFVEGLSCVLDGIFGTGNGS. Over 439-461 the chain is Cytoplasmic; the sequence is TSSSPNIGVLGITKVGSRRVIQC. Residues 462 to 482 traverse the membrane as a helical segment; it reads GAALMLALGMIGKFSALFASL. Over 483 to 485 the chain is Extracellular; sequence PDP. The chain crosses the membrane as a helical span at residues 486–506; the sequence is VLGALFCTLFGMITAVGLSNL. Over 507–516 the chain is Cytoplasmic; it reads QFIDLNSSRN. Residues 517–537 form a helical membrane-spanning segment; that stretch reads LFVLGFSIFFGLVLPSYLRQN. Topologically, residues 538-547 are extracellular; sequence PLVTGITGID. Residues 548 to 568 form a helical membrane-spanning segment; the sequence is QVLNVLLTTAMFVGGCVAFIL. At 569–650 the chain is on the cytoplasmic side; that stretch reads DNTIPGTPEE…SSDEDSQATG (82 aa). T649 bears the Phosphothreonine mark.

It belongs to the nucleobase:cation symporter-2 (NCS2) (TC 2.A.40) family. In terms of assembly, interacts with CLSTN3. Post-translationally, phosphorylated. As to expression, ubiquitous.

The protein resides in the cell membrane. It carries out the reaction L-ascorbate(out) + 2 Na(+)(out) = L-ascorbate(in) + 2 Na(+)(in). Its function is as follows. Sodium/ascorbate cotransporter. Mediates electrogenic uptake of vitamin C, with a stoichiometry of 2 Na(+) for each ascorbate. This chain is Solute carrier family 23 member 2 (SLC23A2), found in Homo sapiens (Human).